The chain runs to 428 residues: uncharacterized protein (428 aa).

The segment at 72–91 is disordered; sequence SQGSPVAPSPNHRSTMYSSS. Position 127 is a phosphoserine (Ser127).

This is an uncharacterized protein from Saccharomyces cerevisiae (strain ATCC 204508 / S288c) (Baker's yeast).